The sequence spans 357 residues: 3-isopropylmalate dehydrogenase (357 aa).

4 residues coordinate substrate: Arg-97, Arg-107, Arg-135, and Asp-224. 3 residues coordinate Mg(2+): Asp-224, Asp-248, and Asp-252. Residue 282 to 294 participates in NAD(+) binding; the sequence is GSAPDIAGQDKAN.

It belongs to the isocitrate and isopropylmalate dehydrogenases family. LeuB type 1 subfamily. In terms of assembly, homodimer. Mg(2+) serves as cofactor. Mn(2+) is required as a cofactor.

Its subcellular location is the cytoplasm. The catalysed reaction is (2R,3S)-3-isopropylmalate + NAD(+) = 4-methyl-2-oxopentanoate + CO2 + NADH. It participates in amino-acid biosynthesis; L-leucine biosynthesis; L-leucine from 3-methyl-2-oxobutanoate: step 3/4. In terms of biological role, catalyzes the oxidation of 3-carboxy-2-hydroxy-4-methylpentanoate (3-isopropylmalate) to 3-carboxy-4-methyl-2-oxopentanoate. The product decarboxylates to 4-methyl-2 oxopentanoate. The chain is 3-isopropylmalate dehydrogenase from Synechococcus sp. (strain CC9902).